The sequence spans 115 residues: MSSTTTQAFSLKTRQAVDEDALLTEEDRVVKEATKGEDCTTRRRACKNCTCGRAELERKMLAEGKKVEMPQMPAGGCGNCAKGDAFRCATCPFLGQPAFDNTSDGKVKLNLTDDI.

Residues 30 to 115 are disordered; it reads VKEATKGEDC…KVKLNLTDDI (86 aa). Residues Cys39, Cys46, Cys49, and Cys51 each coordinate [2Fe-2S] cluster. The interval 39 to 51 is fe-S binding site A; sequence CTTRRRACKNCTC. Residues Cys77, Cys80, Cys88, and Cys91 each contribute to the [4Fe-4S] cluster site. 2 short sequence motifs (cx2C motif) span residues 77-80 and 88-91; these read CGNC and CATC. The segment at 77-91 is fe-S binding site B; sequence CGNCAKGDAFRCATC.

It belongs to the anamorsin family. In terms of assembly, monomer. Requires [2Fe-2S] cluster as cofactor. [4Fe-4S] cluster serves as cofactor.

Its subcellular location is the cytoplasm. It is found in the mitochondrion intermembrane space. In terms of biological role, component of the cytosolic iron-sulfur (Fe-S) protein assembly (CIA) machinery. Required for the maturation of extramitochondrial Fe-S proteins. Part of an electron transfer chain functioning in an early step of cytosolic Fe-S biogenesis, facilitating the de novo assembly of a [4Fe-4S] cluster on the cytosolic Fe-S scaffold complex. Electrons are transferred from NADPH via a FAD- and FMN-containing diflavin oxidoreductase. Together with the diflavin oxidoreductase, also required for the assembly of the diferric tyrosyl radical cofactor of ribonucleotide reductase (RNR), probably by providing electrons for reduction during radical cofactor maturation in the catalytic small subunit. This Trypanosoma cruzi (strain CL Brener) protein is Anamorsin homolog 1.